Reading from the N-terminus, the 418-residue chain is Cobalt-zinc-cadmium resistance protein CzcC (418 aa).

A signal peptide spans 1-22 (MRRLFLPLGLAVAFLSPNFAVA).

It belongs to the outer membrane factor (OMF) (TC 1.B.17) family.

The protein localises to the cell outer membrane. Its function is as follows. CzcC protein appears to modify the specificity of the system, perhaps by acting on the CzcB protein. When the CzcC protein is added to CzcA and CzcB, the efflux system gains specificity for cadmium and cobalt. This is Cobalt-zinc-cadmium resistance protein CzcC (czcC) from Cupriavidus metallidurans (strain ATCC 43123 / DSM 2839 / NBRC 102507 / CH34) (Ralstonia metallidurans).